Here is a 179-residue protein sequence, read N- to C-terminus: Large ribosomal subunit protein uL5 (179 aa).

Belongs to the universal ribosomal protein uL5 family. Part of the 50S ribosomal subunit; part of the 5S rRNA/L5/L18/L25 subcomplex. Contacts the 5S rRNA and the P site tRNA. Forms a bridge to the 30S subunit in the 70S ribosome.

Functionally, this is one of the proteins that bind and probably mediate the attachment of the 5S RNA into the large ribosomal subunit, where it forms part of the central protuberance. In the 70S ribosome it contacts protein S13 of the 30S subunit (bridge B1b), connecting the 2 subunits; this bridge is implicated in subunit movement. Contacts the P site tRNA; the 5S rRNA and some of its associated proteins might help stabilize positioning of ribosome-bound tRNAs. This is Large ribosomal subunit protein uL5 from Prochlorococcus marinus (strain MIT 9301).